Consider the following 682-residue polypeptide: DNA-directed RNA polymerase subunit beta' (682 aa).

Residues Cys69, Cys71, Cys87, and Cys90 each contribute to the Zn(2+) site. 3 residues coordinate Mg(2+): Asp489, Asp491, and Asp493.

The protein belongs to the RNA polymerase beta' chain family. RpoC1 subfamily. In plastids the minimal PEP RNA polymerase catalytic core is composed of four subunits: alpha, beta, beta', and beta''. When a (nuclear-encoded) sigma factor is associated with the core the holoenzyme is formed, which can initiate transcription. The cofactor is Mg(2+). Zn(2+) is required as a cofactor.

The protein resides in the plastid. Its subcellular location is the chloroplast. It catalyses the reaction RNA(n) + a ribonucleoside 5'-triphosphate = RNA(n+1) + diphosphate. In terms of biological role, DNA-dependent RNA polymerase catalyzes the transcription of DNA into RNA using the four ribonucleoside triphosphates as substrates. The protein is DNA-directed RNA polymerase subunit beta' of Platanus occidentalis (Sycamore).